A 155-amino-acid chain; its full sequence is Telokin-like protein 20 homolog (155 aa).

The interval 109–155 is disordered; the sequence is KRAVAPPHHEPEPVPAEEGAVADRAEPESGDAPPSPKKQKLDEREQD.

This chain is Telokin-like protein 20 homolog, found in Orgyia pseudotsugata multicapsid polyhedrosis virus (OpMNPV).